The following is a 929-amino-acid chain: Protocadherin gamma-B3 (929 aa).

An N-terminal signal peptide occupies residues 1–30; that stretch reads MGNSSGWRGPAGQRRMLFLFLLSLLDQALS. Cadherin domains follow at residues 31–133, 134–242, 243–347, 348–452, 453–562, and 570–675; these read EPIR…PPTF, SQNI…PPVF, TQDM…APEI, TLAS…VPVF, HQAS…APLV, and EGSA…QPDL. Topologically, residues 31 to 691 are extracellular; it reads EPIRYAIPEE…SDPQAELQFH (661 aa). N-linked (GlcNAc...) asparagine glycosylation occurs at Asn136. 2 N-linked (GlcNAc...) asparagine glycosylation sites follow: Asn419 and Asn545. The chain crosses the membrane as a helical span at residues 692–712; that stretch reads LVVALALISVLFLLAVILAIS. Residues 713-929 are Cytoplasmic-facing; it reads LRLRCSSRPA…KKKSGKKEKK (217 aa). 2 disordered regions span residues 791–838 and 899–929; these read NDNP…WPNN and ATLT…KEKK. Over residues 919–929 the composition is skewed to basic residues; sequence NKKKSGKKEKK.

Its subcellular location is the cell membrane. Potential calcium-dependent cell-adhesion protein. May be involved in the establishment and maintenance of specific neuronal connections in the brain. The sequence is that of Protocadherin gamma-B3 (PCDHGB3) from Homo sapiens (Human).